The chain runs to 392 residues: N-acyl-phosphatidylethanolamine-hydrolyzing phospholipase D (392 aa).

Met1 carries the post-translational modification N-acetylmethionine. Residues 1-16 (MDENETNQLLMTSNQY) are compositionally biased toward polar residues. Residues 1-39 (MDENETNQLLMTSNQYPKEAVRKRQNSRNSGGSDSSRFS) are disordered. Over residues 27–36 (SRNSGGSDSS) the composition is skewed to low complexity. His183 and His185 together coordinate Zn(2+). Residue Tyr186 participates in an N-acyl-1,2-diacyl-sn-glycero-3-phosphoethanolamine binding. Asp187, His188, and His251 together coordinate Zn(2+). 2 residues coordinate deoxycholate: Lys254 and Met258. Asp282 lines the Zn(2+) pocket. An an N-acyl-1,2-diacyl-sn-glycero-3-phosphoethanolamine-binding site is contributed by His319. Zn(2+) is bound at residue His341. Position 346 (Ala346) interacts with deoxycholate.

The protein belongs to the NAPE-PLD family. As to quaternary structure, homodimer. Bile acids promote the assembly of inactive monomers into an active dimer and enable catalysis. The cofactor is Zn(2+). In terms of tissue distribution, widely expressed. Highest expression in brain, kidney and testis (at protein level). Expressed in adipose tissue (at protein level).

The protein resides in the golgi apparatus membrane. The protein localises to the early endosome membrane. It is found in the nucleus envelope. Its subcellular location is the nucleus. It localises to the nucleoplasm. The enzyme catalyses an N-acyl-1,2-diacyl-sn-glycero-3-phosphoethanolamine + H2O = an N-acylethanolamine + a 1,2-diacyl-sn-glycero-3-phosphate + H(+). It carries out the reaction N-butanoyl-1-hexadecanoyl-2-(9Z,12Z-octadecadienoyl)-sn-glycero-3-phosphoethanolamine + H2O = N-butanoyl ethanolamine + 1-hexadecanoyl-2-(9Z,12Z-octadecadienoyl)-sn-glycero-3-phosphate + H(+). The catalysed reaction is N-hexanoyl-1-hexadecanoyl-2-(9Z,12Z-octadecadienoyl)-sn-glycero-3-phosphoethanolamine + H2O = N-hexanoyl ethanolamine + 1-hexadecanoyl-2-(9Z,12Z-octadecadienoyl)-sn-glycero-3-phosphate + H(+). It catalyses the reaction N-octanoyl-1-hexadecanoyl-2-(9Z,12Z-octadecadienoyl)-sn-glycero-3-phosphoethanolamine + H2O = N-octanoyl ethanolamine + 1-hexadecanoyl-2-(9Z,12Z-octadecadienoyl)-sn-glycero-3-phosphate + H(+). The enzyme catalyses N-decanoyl-1-hexadecanoyl-2-(9Z,12Z-octadecadienoyl)-sn-glycero-3-phosphoethanolamine + H2O = N-decanoyl ethanolamine + 1-hexadecanoyl-2-(9Z,12Z-octadecadienoyl)-sn-glycero-3-phosphate + H(+). It carries out the reaction N-dodecanoyl-1,2-di-(9Z-octadecenoyl)-sn-glycero-3-phosphoethanolamine + H2O = N-dodecanoylethanolamine + 1,2-di-(9Z-octadecenoyl)-sn-glycero-3-phosphate + H(+). The catalysed reaction is N-tetradecanoyl-1,2-di-(9Z-octadecenoyl)-sn-glycero-3-phosphoethanolamine + H2O = N-tetradecanoylethanolamine + 1,2-di-(9Z-octadecenoyl)-sn-glycero-3-phosphate + H(+). It catalyses the reaction N-hexadecanoyl-1,2-di-(9Z-octadecenoyl)-sn-glycero-3-phosphoethanolamine + H2O = N-hexadecanoylethanolamine + 1,2-di-(9Z-octadecenoyl)-sn-glycero-3-phosphate + H(+). The enzyme catalyses N,1-dihexadecanoyl-2-(9Z,12Z-octadecadienoyl)-sn-glycero-3-phosphoethanolamine + H2O = 1-hexadecanoyl-2-(9Z,12Z-octadecadienoyl)-sn-glycero-3-phosphate + N-hexadecanoylethanolamine + H(+). It carries out the reaction N-octadecanoyl-1,2-di-(9Z-octadecenoyl)-sn-glycero-3-phosphoethanolamine + H2O = N-octadecanoyl ethanolamine + 1,2-di-(9Z-octadecenoyl)-sn-glycero-3-phosphate + H(+). The catalysed reaction is N,1,2-tri-(9Z-octadecenoyl)-sn-glycero-3-phosphoethanolamine + H2O = N-(9Z-octadecenoyl) ethanolamine + 1,2-di-(9Z-octadecenoyl)-sn-glycero-3-phosphate + H(+). It catalyses the reaction N-(5Z,8Z,11Z,14Z-eicosatetraenoyl)-1,2-diacyl-sn-glycero-3-phosphoethanolamine + H2O = N-(5Z,8Z,11Z,14Z-eicosatetraenoyl)-ethanolamine + a 1,2-diacyl-sn-glycero-3-phosphate + H(+). The enzyme catalyses N-(5Z,8Z,11Z,14Z-eicosatetraenoyl)-1,2-di-(9Z-octadecenoyl)-sn-glycero-3-phosphoethanolamine + H2O = N-(5Z,8Z,11Z,14Z-eicosatetraenoyl)-ethanolamine + 1,2-di-(9Z-octadecenoyl)-sn-glycero-3-phosphate + H(+). It carries out the reaction 1-O-(1Z-octadecenoyl)-2-(9Z-octadecenoyl)-sn-glycero-3-phospho-N-hexadecanoyl-ethanolamine + H2O = 1-O-(1Z-octadecenoyl)-2-(9Z-octadecenoyl)-sn-glycero-3-phosphate + N-hexadecanoylethanolamine + H(+). The catalysed reaction is N,1-diacyl-sn-glycero-3-phosphoethanolamine + H2O = an N-acylethanolamine + a 1-acyl-sn-glycero-3-phosphate + H(+). It catalyses the reaction N,1-dihexadecanoyl-sn-glycero-3-phosphoethanolamine + H2O = N-hexadecanoylethanolamine + 1-hexadecanoyl-sn-glycero-3-phosphate + H(+). The enzyme catalyses N-(5Z,8Z,11Z,14Z-eicosatetraenoyl)-1-(9Z-octadecenoyl)-sn-glycero-3-phosphoethanolamine + H2O = N-(5Z,8Z,11Z,14Z-eicosatetraenoyl)-ethanolamine + 1-(9Z-octadecenoyl)-sn-glycero-3-phosphate + H(+). Its activity is regulated as follows. Activated by divalent cations. Activated by bile acids. Its function is as follows. D-type phospholipase that hydrolyzes N-acyl-phosphatidylethanolamines (NAPEs) to produce bioactive N-acylethanolamines/fatty acid ethanolamides (NAEs/FAEs) and phosphatidic acid. Cleaves the terminal phosphodiester bond of diacyl- and alkenylacyl-NAPEs, primarily playing a role in the generation of long-chain saturated and monounsaturated NAEs in the brain. May control NAPE homeostasis in dopaminergic neuron membranes and regulate neuron survival, partly through RAC1 activation. As a regulator of lipid metabolism in the adipose tissue, mediates the crosstalk between adipocytes, gut microbiota and immune cells to control body temperature and weight. In particular, regulates energy homeostasis by promoting cold-induced brown or beige adipocyte differentiation program to generate heat from fatty acids and glucose. Has limited D-type phospholipase activity toward N-acyl lyso-NAPEs. The polypeptide is N-acyl-phosphatidylethanolamine-hydrolyzing phospholipase D (NAPEPLD) (Bos taurus (Bovine)).